We begin with the raw amino-acid sequence, 185 residues long: Elongation factor P (185 aa).

The protein belongs to the elongation factor P family.

The protein resides in the cytoplasm. It functions in the pathway protein biosynthesis; polypeptide chain elongation. Functionally, involved in peptide bond synthesis. Stimulates efficient translation and peptide-bond synthesis on native or reconstituted 70S ribosomes in vitro. Probably functions indirectly by altering the affinity of the ribosome for aminoacyl-tRNA, thus increasing their reactivity as acceptors for peptidyl transferase. The sequence is that of Elongation factor P from Carboxydothermus hydrogenoformans (strain ATCC BAA-161 / DSM 6008 / Z-2901).